The following is a 69-amino-acid chain: Small archaeal modifier protein 2 (69 aa).

Residue K55 forms a Glycyl lysine isopeptide (Lys-Gly) (interchain with G-Cter in SAMP2) linkage. G69 bears the 1-thioglycine; alternate mark. Residue G69 is modified to Glycyl adenylate; alternate. A Glycyl lysine isopeptide (Gly-Lys) (interchain with K-? in acceptor proteins); alternate cross-link involves residue G69.

The C-terminal glycine is likely acyl-adenylated (-COAMP) by UbaA, and also probably thiocarboxylated (-COSH) to function in sulfur transfer.

Its function is as follows. Functions as a protein modifier covalently attached to lysine residues of substrate proteins, as well as a sulfur carrier in tRNA thiolation. The protein modification process is termed sampylation and involves the formation of an isopeptide bond between the SAMP2 C-terminal glycine carboxylate and the epsilon-amino group of lysine residues on target proteins. Is able to form polymeric chains with itself likely at Lys-55, similar to ubiquitin and other ubiquitin-like proteins. May serve as a proteolytic signal in the cell to target proteins for degradation by proteasomes. In Pyrococcus furiosus (strain ATCC 43587 / DSM 3638 / JCM 8422 / Vc1), this protein is Small archaeal modifier protein 2.